The following is a 116-amino-acid chain: Ribonuclease P protein component (116 aa).

It belongs to the RnpA family. In terms of assembly, consists of a catalytic RNA component (M1 or rnpB) and a protein subunit.

The catalysed reaction is Endonucleolytic cleavage of RNA, removing 5'-extranucleotides from tRNA precursor.. Its function is as follows. RNaseP catalyzes the removal of the 5'-leader sequence from pre-tRNA to produce the mature 5'-terminus. It can also cleave other RNA substrates such as 4.5S RNA. The protein component plays an auxiliary but essential role in vivo by binding to the 5'-leader sequence and broadening the substrate specificity of the ribozyme. This is Ribonuclease P protein component from Geobacillus sp. (strain WCH70).